Consider the following 504-residue polypeptide: 2,3-bisphosphoglycerate-independent phosphoglycerate mutase (504 aa).

Mn(2+) contacts are provided by D9 and S59. S59 functions as the Phosphoserine intermediate in the catalytic mechanism. Residues H120, 149–150 (RD), R181, R187, 253–256 (RPDR), and K326 contribute to the substrate site. Residues D393, H397, D434, H435, and H451 each contribute to the Mn(2+) site.

It belongs to the BPG-independent phosphoglycerate mutase family. Mn(2+) serves as cofactor.

The catalysed reaction is (2R)-2-phosphoglycerate = (2R)-3-phosphoglycerate. Its pathway is carbohydrate degradation; glycolysis; pyruvate from D-glyceraldehyde 3-phosphate: step 3/5. Catalyzes the interconversion of 2-phosphoglycerate and 3-phosphoglycerate. In Haloquadratum walsbyi (strain DSM 16790 / HBSQ001), this protein is 2,3-bisphosphoglycerate-independent phosphoglycerate mutase.